Here is a 324-residue protein sequence, read N- to C-terminus: MSSLYTLWQQFYPPAPTFTEKDVGAGSQVGKVFIITGANSGIGYALVKLLYPTGATIYVAGRSPQKIQTAINEITSVSPSPSTPATLKPLHLDLDDLTSIKAAAAAFAAQESRLDIIWNNAGGGYPVGSVSKQGIEAHMGSHCVAPLLFTNELLPLLRAAARTAPKDSVRVVWTGSAQIQLNAPQGGVDFARVEKPTTHDMQDYGAAKAGNWFLAVEGARRWGKDGIVSVCQNPGNLSTPIYDIFGWFMLALIRGLFLYDAKYGAYTMLFSGFSPEVNKGTNGAYIWPFGRIKPPPRADVLQAGSEGKAKEFWEWCERSWKKHV.

7 residues coordinate NADP(+): Ile-42, Lys-66, Asp-93, Asn-120, Tyr-204, Lys-208, and Thr-239. Tyr-204 serves as the catalytic Proton donor. Lys-208 functions as the Lowers pKa of active site Tyr in the catalytic mechanism.

This sequence belongs to the short-chain dehydrogenases/reductases (SDR) family.

It functions in the pathway secondary metabolite biosynthesis. In terms of biological role, short-chain dehydrogenase/reductase; part of the gene cluster that mediates the biosynthesis of iso-A82775C, a enylepoxycyclohexane and biosynthetic precursor of the chloropestolide anticancer natural products. Within the cluster, the prenyltransferase iacE prenylates siccayne to generate pestalodiol E, using dimethylallyl diphosphate (DMAPP) as cosubstrate. The probable oxidoreductase iacF is then involved in the epoxidation of pestalodiol F to pestalodiol F, which is further converted to pestalofone A by the short-chain dehydrogenase/reductase iacG. Iso-A82775C is subsequently generated from pestalofone A by the short-chain dehydrogenase/reductase iacC. Iso-A82775C is further condensed with maldoxin via a Diels-Alder reaction to produce the anticancer natural products chloropestolides A to E. The chain is Short-chain dehydrogenase/reductase iacJ from Pestalotiopsis fici (strain W106-1 / CGMCC3.15140).